The primary structure comprises 495 residues: Beta-galactoside alpha-2,6-sialyltransferase 2 (495 aa).

At 1-10 the chain is on the cytoplasmic side; it reads MKPHLKQWRQ. Residues 11-31 form a helical; Signal-anchor for type II membrane protein membrane-spanning segment; sequence GMLCGVFAWGLFFVVIFLYFT. Over 32 to 495 the chain is Lumenal; it reads DSSPAKPAPS…LQAVRCPPGA (464 aa). Disordered regions lie at residues 63 to 90 and 107 to 165; these read GASE…LRTW and GRTS…EDGE. Over residues 134 to 143 the composition is skewed to low complexity; that stretch reads PEGARPPRAA. Residues 144–153 show a composition bias toward basic residues; the sequence is PGRRAKRGPR. 3 cysteine pairs are disulfide-bonded: C225-C491, C268-C420, and C438-C449. 2 N-linked (GlcNAc...) asparagine glycosylation sites follow: N279 and N309.

Belongs to the glycosyltransferase 29 family.

It localises to the golgi apparatus. Its subcellular location is the golgi stack membrane. The catalysed reaction is a beta-D-galactoside + CMP-N-acetyl-beta-neuraminate = an N-acetyl-alpha-neuraminyl-(2-&gt;6)-beta-D-galactosyl derivative + CMP + H(+). Its function is as follows. Transfers sialic acid from the donor of substrate CMP-sialic acid to galactose containing acceptor substrates. Has alpha-2,6-sialyltransferase activity toward oligosaccharides that have the Gal-beta-1,4-GlcNAc sequence at the non-reducing end of their carbohydrate groups, but it has weak or no activities toward glycoproteins and glycolipids. This is Beta-galactoside alpha-2,6-sialyltransferase 2 (ST6GAL2) from Bos taurus (Bovine).